Here is a 299-residue protein sequence, read N- to C-terminus: 4-diphosphocytidyl-2-C-methyl-D-erythritol kinase (299 aa).

Residue Lys-22 is part of the active site. 108–118 contacts ATP; the sequence is PVGAGLGGGSS. Asp-150 is a catalytic residue.

This sequence belongs to the GHMP kinase family. IspE subfamily.

It carries out the reaction 4-CDP-2-C-methyl-D-erythritol + ATP = 4-CDP-2-C-methyl-D-erythritol 2-phosphate + ADP + H(+). It participates in isoprenoid biosynthesis; isopentenyl diphosphate biosynthesis via DXP pathway; isopentenyl diphosphate from 1-deoxy-D-xylulose 5-phosphate: step 3/6. In terms of biological role, catalyzes the phosphorylation of the position 2 hydroxy group of 4-diphosphocytidyl-2C-methyl-D-erythritol. This is 4-diphosphocytidyl-2-C-methyl-D-erythritol kinase from Desulfotalea psychrophila (strain LSv54 / DSM 12343).